The sequence spans 356 residues: Protein pelota homolog (356 aa).

Belongs to the eukaryotic release factor 1 family. Pelota subfamily. In terms of assembly, monomer. The cofactor is a divalent metal cation.

The protein resides in the cytoplasm. Functionally, may function in recognizing stalled ribosomes, interact with stem-loop structures in stalled mRNA molecules, and effect endonucleolytic cleavage of the mRNA. May play a role in the release non-functional ribosomes and degradation of damaged mRNAs. Has endoribonuclease activity. The polypeptide is Protein pelota homolog (Desulfurococcus amylolyticus (strain DSM 18924 / JCM 16383 / VKM B-2413 / 1221n) (Desulfurococcus kamchatkensis)).